Here is a 351-residue protein sequence, read N- to C-terminus: uncharacterized protein (351 aa).

Positions 215, 226, 290, 319, and 333 each coordinate Mn(2+).

Belongs to the peptidase M24B family. It depends on Mn(2+) as a cofactor.

This is an uncharacterized protein from Staphylococcus aureus (strain USA300).